The following is a 795-amino-acid chain: Phenylalanine--tRNA ligase beta subunit (795 aa).

One can recognise a tRNA-binding domain in the interval Ala-39–Arg-148. The region spanning Pro-401–Asn-476 is the B5 domain. Residues Asp-454, Asp-460, Glu-463, and Glu-464 each coordinate Mg(2+). One can recognise an FDX-ACB domain in the interval Ser-701–Arg-794.

It belongs to the phenylalanyl-tRNA synthetase beta subunit family. Type 1 subfamily. In terms of assembly, tetramer of two alpha and two beta subunits. The cofactor is Mg(2+).

Its subcellular location is the cytoplasm. The enzyme catalyses tRNA(Phe) + L-phenylalanine + ATP = L-phenylalanyl-tRNA(Phe) + AMP + diphosphate + H(+). In Mannheimia succiniciproducens (strain KCTC 0769BP / MBEL55E), this protein is Phenylalanine--tRNA ligase beta subunit.